The chain runs to 202 residues: Proteasome subunit beta 1 (202 aa).

A propeptide spans methionine 1–glycine 8 (removed in mature form; by autocatalysis). The active-site Nucleophile is threonine 9.

The protein belongs to the peptidase T1B family. In terms of assembly, the 20S proteasome core is composed of 14 alpha and 14 beta subunits that assemble into four stacked heptameric rings, resulting in a barrel-shaped structure. The two inner rings, each composed of seven catalytic beta subunits, are sandwiched by two outer rings, each composed of seven alpha subunits. The catalytic chamber with the active sites is on the inside of the barrel. Has a gated structure, the ends of the cylinder being occluded by the N-termini of the alpha-subunits. Is capped at one or both ends by the proteasome regulatory ATPase, PAN.

The protein resides in the cytoplasm. It catalyses the reaction Cleavage of peptide bonds with very broad specificity.. With respect to regulation, the formation of the proteasomal ATPase PAN-20S proteasome complex, via the docking of the C-termini of PAN into the intersubunit pockets in the alpha-rings, triggers opening of the gate for substrate entry. Interconversion between the open-gate and close-gate conformations leads to a dynamic regulation of the 20S proteasome proteolysis activity. Functionally, component of the proteasome core, a large protease complex with broad specificity involved in protein degradation. The sequence is that of Proteasome subunit beta 1 from Desulfurococcus amylolyticus (strain DSM 18924 / JCM 16383 / VKM B-2413 / 1221n) (Desulfurococcus kamchatkensis).